Consider the following 181-residue polypeptide: Probable GTP-binding protein EngB (181 aa).

The EngB-type G domain occupies 18-181 (PKNEICFVGR…LQDLVNNLFN (164 aa)). Residues 26 to 33 (GRSNVGKS), 52 to 56 (GKTKL), 70 to 73 (DLPG), 137 to 140 (TKRD), and 164 to 166 (VSI) each bind GTP. Residues Ser33 and Thr54 each contribute to the Mg(2+) site.

This sequence belongs to the TRAFAC class TrmE-Era-EngA-EngB-Septin-like GTPase superfamily. EngB GTPase family. The cofactor is Mg(2+).

Necessary for normal cell division and for the maintenance of normal septation. This Mycoplasma mobile (strain ATCC 43663 / 163K / NCTC 11711) (Mesomycoplasma mobile) protein is Probable GTP-binding protein EngB.